A 183-amino-acid chain; its full sequence is A-type ATP synthase subunit E (183 aa).

It belongs to the V-ATPase E subunit family. Has multiple subunits, A(3), B(3), C, D, E, F, G, I and K(x); there may be a few other subunits as well.

The protein resides in the cell membrane. Functionally, component of the A-type ATP synthase that produces ATP from ADP in the presence of a proton gradient across the membrane. This chain is A-type ATP synthase subunit E, found in Methanosarcina mazei (strain ATCC BAA-159 / DSM 3647 / Goe1 / Go1 / JCM 11833 / OCM 88) (Methanosarcina frisia).